The sequence spans 523 residues: MAAVGRVGSFGSSPPGLSSTYTGGPLGNEIASGNGGAAAGDDEDGQNLWSCILSEVSTRSRSKLPAGKNVLLLGEDGAGKTSLIRKIQGIEEYKKGRGLEYLYLNVHDEDRDDQTRCNVWILDGDLYHKGLLKFSLDAVSLKDTLVMLVVDMSKPWTALDSLQKWASVVREHVDKLKIPPEEMKQMEQKLIRDFQEYVEPGEDFPASPQRRNTASQEDKDDSVVLPLGADTLTHNLGIPVLVVCTKCDAISVLEKEHDYRDEHFDFIQSHIRKFCLQYGAALIYTSVKENKNIDLVYKYIVQKLYGFPYKIPAVVVEKDAVFIPAGWDNDKKIGILHENFQTLKAEDNFEDIITKPPVRKFVHEKEIMAEDDQVFLMKLQSLLAKQPPTAAGRPVDASPRVPGGSPRTPNRSVSSNVASVSPIPAGSKKIDPNMKAGATSEGVLANFFNSLLSKKTGSPGGPGVSGGSPAGGAGGGSSGLPPSTKKSGQKPVLDVHAELDRITRKPVTVSPTTPTSPTEGEAS.

The disordered stretch occupies residues Met1–Pro25. Low complexity predominate over residues Ser9–Ser19. Gly74–Thr81 is a binding site for ATP. Ser207 is modified (phosphoserine). At Thr213 the chain carries Phosphothreonine. Disordered stretches follow at residues Pro387–Met434 and Thr456–Ser523. 2 positions are modified to phosphoserine: Ser398 and Ser405. Thr408 carries the phosphothreonine modification. Phosphoserine occurs at positions 412, 419, 421, and 427. Residues Ser412 to Ser421 are compositionally biased toward low complexity. Over residues Ser458 to Ser478 the composition is skewed to gly residues. Ser487 carries the phosphoserine modification. Residues Leu493–Thr503 are compositionally biased toward basic and acidic residues. Low complexity predominate over residues Pro506 to Ser523. Ser510 is modified (phosphoserine). A phosphothreonine mark is found at Thr512, Thr513, and Thr515. Ser516 bears the Phosphoserine mark.

The protein belongs to the dynein light intermediate chain family. In terms of assembly, homodimer. The cytoplasmic dynein 1 complex consists of two catalytic heavy chains (HCs) and a number of non-catalytic subunits presented by intermediate chains (ICs), light intermediate chains (LICs) and light chains (LCs); the composition seems to vary in respect to the IC, LIC and LC composition. The heavy chain homodimer serves as a scaffold for the probable homodimeric assembly of the respective non-catalytic subunits. The ICs and LICs bind directly to the HC dimer and the LCs assemble on the IC dimer. Self-associates. Interacts with DYNC1H1; DYNC1LI1 and DYNC1LI2 bind mutually exclusive to DYNC1H1. Interacts with PCNT. Forms a complex with RAB11FIP3 and RAB11A1; the interaction between DYNC1LI1 and RAB11FIP3 is direct and induces DYNC1LI1 localization onto endosomal membrane; the complex regulates endocytic trafficking. Interacts with RUFY3. (Microbial infection) Interacts with human adenovirus 5 hexon protein; this interaction probably allows virus intracellular transport. In terms of processing, phosphorylated during mitosis but not in interphase.

The protein resides in the cytoplasm. It localises to the chromosome. Its subcellular location is the centromere. The protein localises to the kinetochore. It is found in the cytoskeleton. The protein resides in the spindle pole. It localises to the recycling endosome membrane. Functionally, acts as one of several non-catalytic accessory components of the cytoplasmic dynein 1 complex that are thought to be involved in linking dynein to cargos and to adapter proteins that regulate dynein function. Cytoplasmic dynein 1 acts as a motor for the intracellular retrograde motility of vesicles and organelles along microtubules. May play a role in binding dynein to membranous organelles or chromosomes. Probably involved in the microtubule-dependent transport of pericentrin. Is required for progress through the spindle assembly checkpoint. The phosphorylated form appears to be involved in the selective removal of MAD1L1 and MAD1L2 but not BUB1B from kinetochores. Forms a functional Rab11/RAB11FIP3/dynein complex onto endosomal membrane that regulates the movement of peripheral sorting endosomes (SE) along microtubule tracks toward the microtubule organizing center/centrosome, generating the endosomal recycling compartment (ERC). In Homo sapiens (Human), this protein is Cytoplasmic dynein 1 light intermediate chain 1 (DYNC1LI1).